A 309-amino-acid polypeptide reads, in one-letter code: Calcium homeostasis modulator protein 5 (309 aa).

At methionine 1 to lysine 15 the chain is on the cytoplasmic side. A 1,2-diacyl-sn-glycero-3-phosphate is bound by residues lysine 15, arginine 32, and valine 37. A helical membrane pass occupies residues threonine 16–valine 37. Residues alanine 38 to threonine 45 are Extracellular-facing. Cystine bridges form between cysteine 41–cysteine 127, cysteine 43–cysteine 158, and cysteine 142–cysteine 149. The chain crosses the membrane as a helical span at residues glutamate 46–asparagine 70. The Cytoplasmic segment spans residues asparagine 71 to valine 99. The helical transmembrane segment at leucine 100–methionine 129 threads the bilayer. Glutamine 102 and asparagine 121 together coordinate a 1,2-diacyl-sn-glycero-3-phosphate. The Extracellular portion of the chain corresponds to serine 130–serine 174. The helical transmembrane segment at leucine 175–tyrosine 200 threads the bilayer. Topologically, residues alanine 201–methionine 309 are cytoplasmic. A 1,2-diacyl-sn-glycero-3-phosphate is bound at residue arginine 202.

It belongs to the CALHM family. Oligomerizes to form undecameric cone-shaped channels.

It is found in the membrane. May assemble to form large pore channels with gating and ion conductance likely regulated by membrane lipids. The chain is Calcium homeostasis modulator protein 5 from Homo sapiens (Human).